The chain runs to 149 residues: Alpha-crystallin A chain (149 aa).

In terms of domain architecture, sHSP spans leucine 41–proline 149. Positions 89, 91, 96, and 143 each coordinate Zn(2+).

This sequence belongs to the small heat shock protein (HSP20) family. In terms of assembly, heteropolymer composed of three CRYAA and one CRYAB subunits. Inter-subunit bridging via zinc ions enhances stability, which is crucial as there is no protein turn over in the lens. Can also form homodimers and homotetramers (dimers of dimers) which serve as the building blocks of homooligomers. Within homooligomers, the zinc-binding motif is created from residues of 3 different molecules. His-89 and Glu-91 from one molecule are ligands of the zinc ion, and His-96 and His-143 residues from additional molecules complete the site with tetrahedral coordination geometry. Part of a complex required for lens intermediate filament formation composed of BFSP1, BFSP2 and CRYAA.

Its subcellular location is the cytoplasm. The protein resides in the nucleus. Contributes to the transparency and refractive index of the lens. May act as a chaperone, preventing aggregation of various proteins under a wide range of stress conditions. This chain is Alpha-crystallin A chain (CRYAA), found in Columba livia (Rock dove).